Here is a 219-residue protein sequence, read N- to C-terminus: Ras-related protein RABA5d (219 aa).

N-acetylserine is present on Ser-2. 19–26 (GDSAVGKS) provides a ligand contact to GTP. Residues 41 to 49 (SKATIGVEF) carry the Effector region motif. Residues 67 to 71 (DTAGQ), 125 to 128 (NKCD), and 155 to 156 (SA) contribute to the GTP site. 2 S-geranylgeranyl cysteine lipidation sites follow: Cys-215 and Cys-216.

The protein belongs to the small GTPase superfamily. Rab family.

Its subcellular location is the cell membrane. Functionally, intracellular vesicle trafficking and protein transport. This Arabidopsis thaliana (Mouse-ear cress) protein is Ras-related protein RABA5d (RABA5D).